Reading from the N-terminus, the 617-residue chain is uncharacterized protein (617 aa).

A compositionally biased stretch (polar residues) spans 387-396 (NGGMSATQLP). 2 disordered regions span residues 387 to 419 (NGGM…HAAP) and 443 to 599 (YDDF…NNEQ). The span at 404 to 414 (RQAAANQFQQR) shows a compositional bias: low complexity. A compositionally biased stretch (polar residues) spans 453–474 (QPLTQQQKDAARQRYQSASPEQ). 2 stretches are compositionally biased toward basic and acidic residues: residues 490-499 (QRREAARERI) and 522-531 (QRRDAARERI). A compositionally biased stretch (polar residues) spans 549–570 (RPLNQQQRDNARQRVQSASPEQ). Residues 572 to 585 (QVFREKVQESRPQR) are compositionally biased toward basic and acidic residues. Over residues 586-599 (LNDSNHTVRLNNEQ) the composition is skewed to polar residues.

This is an uncharacterized protein from Escherichia coli (strain K12).